We begin with the raw amino-acid sequence, 347 residues long: Probable G-protein coupled receptor 148 (347 aa).

The Extracellular portion of the chain corresponds to 1 to 51; sequence MGDELAPCPVGTTAWPALIQLISKTPCMPQAASNTSLGLGDLRVPSSMLYW. N-linked (GlcNAc...) asparagine glycosylation is present at N34. Residues 52 to 72 traverse the membrane as a helical segment; the sequence is LFLPSSLLAAATLAVSPLLLV. Residues 73–85 are Cytoplasmic-facing; sequence TILRNQRLRQEPH. The chain crosses the membrane as a helical span at residues 86–106; it reads YLLPANILLSDLAYILLHMLI. The Extracellular portion of the chain corresponds to 107–130; that stretch reads SSSSLGGWELGRMACGILTDAVFA. The chain crosses the membrane as a helical span at residues 131-151; the sequence is ACTSTILSFTAIVLHTYLAVI. The Cytoplasmic segment spans residues 152–165; sequence HPLRYLSFMSHGAA. Residues 166–186 form a helical membrane-spanning segment; sequence WKAVALIWLVACCFPTFLIWL. The Extracellular portion of the chain corresponds to 187 to 214; the sequence is SKWQDAQLEEQGASYILPPSMGTQPGCG. A helical transmembrane segment spans residues 215-235; sequence LLVIVTYTSILCVLFLCTALI. Residues 236 to 261 lie on the Cytoplasmic side of the membrane; sequence ANCFWRIYAEAKTSGIWGQGYSRARG. The helical transmembrane segment at 262–282 threads the bilayer; it reads TLLIHSVLITLYVSTGVVFSL. Residues 283–299 lie on the Extracellular side of the membrane; sequence DMVLTRYHHIDSGTHTW. Residues 300–322 form a helical membrane-spanning segment; sequence LLAANSEVLMMLPRAMLTYLYLL. Residues 323–347 are Cytoplasmic-facing; that stretch reads RYRQLLGMVRGHLPSRRHQAIFTIS.

Belongs to the G-protein coupled receptor 1 family. In terms of tissue distribution, expression restricted to nervous system and testis. Is also detected in several tumors types, most notably prostate cancer.

It localises to the cell membrane. Functionally, orphan receptor. The sequence is that of Probable G-protein coupled receptor 148 (GPR148) from Homo sapiens (Human).